The sequence spans 77 residues: Large ribosomal subunit protein uL29 (77 aa).

This sequence belongs to the universal ribosomal protein uL29 family.

This chain is Large ribosomal subunit protein uL29, found in Mycolicibacterium smegmatis (strain ATCC 700084 / mc(2)155) (Mycobacterium smegmatis).